The primary structure comprises 221 residues: MGQKVHPHGLRVGVIKDWDAKWYANSQNFADNLIEDDKIRKFVKKRSYSAGIAKIEIERTAKRVKINIHTGKPGMIIGKGGKGIEELKSEILKMIKEKNVIINIVEVKRPETDAQLMAENVAQQLEKRISFRRAMKQTIQRAMRSGAKGVKTACSGRLGGAEIARTEQYHEGTIPLQTLRADIDYGFAEADTTYGKIGVKVWLYKGEVLPTKKVRTEEISQ.

The region spanning 39–108 (IRKFVKKRSY…NVIINIVEVK (70 aa)) is the KH type-2 domain.

It belongs to the universal ribosomal protein uS3 family. In terms of assembly, part of the 30S ribosomal subunit. Forms a tight complex with proteins S10 and S14.

Its function is as follows. Binds the lower part of the 30S subunit head. Binds mRNA in the 70S ribosome, positioning it for translation. This chain is Small ribosomal subunit protein uS3, found in Clostridium novyi (strain NT).